A 125-amino-acid polypeptide reads, in one-letter code: Small ribosomal subunit protein uS13 (125 aa).

Belongs to the universal ribosomal protein uS13 family. In terms of assembly, part of the 30S ribosomal subunit. Forms a loose heterodimer with protein S19. Forms two bridges to the 50S subunit in the 70S ribosome.

In terms of biological role, located at the top of the head of the 30S subunit, it contacts several helices of the 16S rRNA. In the 70S ribosome it contacts the 23S rRNA (bridge B1a) and protein L5 of the 50S subunit (bridge B1b), connecting the 2 subunits; these bridges are implicated in subunit movement. Contacts the tRNAs in the A and P-sites. In Rickettsia bellii (strain OSU 85-389), this protein is Small ribosomal subunit protein uS13.